A 312-amino-acid polypeptide reads, in one-letter code: Methionyl-tRNA formyltransferase (312 aa).

113–116 (SILP) lines the (6S)-5,6,7,8-tetrahydrofolate pocket.

The protein belongs to the Fmt family.

It carries out the reaction L-methionyl-tRNA(fMet) + (6R)-10-formyltetrahydrofolate = N-formyl-L-methionyl-tRNA(fMet) + (6S)-5,6,7,8-tetrahydrofolate + H(+). Its function is as follows. Attaches a formyl group to the free amino group of methionyl-tRNA(fMet). The formyl group appears to play a dual role in the initiator identity of N-formylmethionyl-tRNA by promoting its recognition by IF2 and preventing the misappropriation of this tRNA by the elongation apparatus. This is Methionyl-tRNA formyltransferase from Hydrogenovibrio crunogenus (strain DSM 25203 / XCL-2) (Thiomicrospira crunogena).